The primary structure comprises 251 residues: Esterase mlcF (251 aa).

Catalysis depends on charge relay system residues Ser-126, Asp-193, and His-221.

The protein belongs to the LovG family.

The catalysed reaction is dihydro-ML-236C-[compactin nonaketide synthase] + H2O = holo-[compactin nonaketide synthase] + dihydro-ML-236C carboxylate + H(+). It functions in the pathway polyketide biosynthesis. In terms of biological role, esterase; part of the gene cluster that mediates the biosynthesis of compactin, also known as mevastatin or ML-236B, and which acts as a potent competitive inhibitor of HMG-CoA reductase. Compactin biosynthesis is performed in two stages. The first stage is catalyzed by the nonaketide synthase mlcA, which belongs to type I polyketide synthases and catalyzes the iterative nine-step formation of the polyketide. This PKS stage is completed by the action of dehydrogenase mlcG, which catalyzes the NADPH-dependent reduction of the unsaturated tetra-, penta- and heptaketide intermediates that arise during the mlcA-mediated biosynthesis of the nonaketide chain and leads to dihydro-ML-236C carboxylate. Covalently bound dihydro-ML-236C carboxylate is released from mlcA by the mlcF esterase. Conversion of dihydro-ML-236C carboxylate into ML-236A carboxylate is subsequently performed with the participation of molecular oxygen and P450 monoogygenase mlcC. Finally, mlcH performs the conversion of ML-236A carboxylate to ML-236B/compactin carboxylate through the addition of the side-chain diketide moiety produced by the diketide synthase mlcB. The chain is Esterase mlcF from Penicillium citrinum.